Consider the following 133-residue polypeptide: Profilin-3 (133 aa).

Cysteine 13 and cysteine 117 are disulfide-bonded. The Involved in PIP2 interaction signature appears at 83–99; sequence AVIRGKKGSGGITIKKT. Threonine 113 bears the Phosphothreonine mark.

It belongs to the profilin family. As to quaternary structure, occurs in many kinds of cells as a complex with monomeric actin in a 1:1 ratio. Post-translationally, phosphorylated by MAP kinases.

Its subcellular location is the cytoplasm. It is found in the cytoskeleton. Functionally, binds to actin and affects the structure of the cytoskeleton. At high concentrations, profilin prevents the polymerization of actin, whereas it enhances it at low concentrations. This chain is Profilin-3, found in Corylus avellana (European hazel).